Consider the following 101-residue polypeptide: ATP-dependent Clp protease adapter protein ClpS (101 aa).

Belongs to the ClpS family. In terms of assembly, binds to the N-terminal domain of the chaperone ClpA.

In terms of biological role, involved in the modulation of the specificity of the ClpAP-mediated ATP-dependent protein degradation. The polypeptide is ATP-dependent Clp protease adapter protein ClpS (Corynebacterium efficiens (strain DSM 44549 / YS-314 / AJ 12310 / JCM 11189 / NBRC 100395)).